Reading from the N-terminus, the 228-residue chain is Cell surface Cu-only superoxide dismutase 5 (228 aa).

Residues 1-15 (MKYLSIFLLATFALA) form the signal peptide. Residue N53 is glycosylated (N-linked (GlcNAc...) asparagine). Cu cation is bound by residues H75 and H77. N-linked (GlcNAc...) asparagine glycosylation occurs at N86. The cysteines at positions 87 and 162 are disulfide-linked. Residue H93 participates in Cu cation binding. N98 is a glycosylation site (N-linked (GlcNAc...) asparagine). Residue H153 coordinates Cu cation. Residues N156, N164, N176, N181, and N192 are each glycosylated (N-linked (GlcNAc...) asparagine). Residues 176 to 201 (NTTMSNSSSSSSQSAVNTSSSMASTA) are compositionally biased toward low complexity. Positions 176–204 (NTTMSNSSSSSSQSAVNTSSSMASTAPQG) are disordered. N205 carries the GPI-anchor amidated asparagine lipid modification. Residues 206–228 (GAERAVVNGLLAAGVVGVIAALI) constitute a propeptide, removed in mature form.

The protein belongs to the Cu-Zn superoxide dismutase family. In terms of assembly, monomer. Requires Cu cation as cofactor. In terms of processing, the GPI-anchor is attached to the protein in the endoplasmic reticulum and serves to target the protein to the cell surface. There, the glucosamine-inositol phospholipid moiety is cleaved off and the GPI-modified mannoprotein is covalently attached via its lipidless GPI glycan remnant to the 1,6-beta-glucan of the outer cell wall layer.

It is found in the secreted. The protein resides in the cell wall. Its subcellular location is the membrane. It catalyses the reaction 2 superoxide + 2 H(+) = H2O2 + O2. Secreted in a disulfide-oxidized form and apo-pools of secreted SOD5 can readily capture extracellular copper for rapid induction of enzyme activity. Functionally, superoxide dismutases serve to convert damaging superoxide radicals, a key form of ROS, to less damaging hydrogen peroxide that can be converted into water by catalase action. Degrades host-derived reactive oxygen species to escape innate immune surveillance. Involved in the occurrence of miconazole-tolerant persisters in biofilms. Persisters are cells that survive high doses of an antimicrobial agent. The unusual attributes of SOD5-like fungal proteins, including the absence of zinc and an open active site that readily captures extracellular copper, make these SODs well suited to meet challenges in zinc and copper availability at the host-pathogen interface. This chain is Cell surface Cu-only superoxide dismutase 5 (SOD5), found in Candida albicans (strain SC5314 / ATCC MYA-2876) (Yeast).